Consider the following 690-residue polypeptide: Elongation factor G (690 aa).

The region spanning 8 to 282 (EKTRNIGIMA…AVVAYMPSPL (275 aa)) is the tr-type G domain. Residues 17–24 (AHIDAGKT), 81–85 (DTPGH), and 135–138 (NKMD) contribute to the GTP site.

Belongs to the TRAFAC class translation factor GTPase superfamily. Classic translation factor GTPase family. EF-G/EF-2 subfamily.

Its subcellular location is the cytoplasm. Functionally, catalyzes the GTP-dependent ribosomal translocation step during translation elongation. During this step, the ribosome changes from the pre-translocational (PRE) to the post-translocational (POST) state as the newly formed A-site-bound peptidyl-tRNA and P-site-bound deacylated tRNA move to the P and E sites, respectively. Catalyzes the coordinated movement of the two tRNA molecules, the mRNA and conformational changes in the ribosome. This chain is Elongation factor G, found in Alkaliphilus oremlandii (strain OhILAs) (Clostridium oremlandii (strain OhILAs)).